Here is a 347-residue protein sequence, read N- to C-terminus: Leucine-rich repeat-containing protein 69 (347 aa).

LRR repeat units follow at residues Gly-38–Thr-60, Gln-61–Leu-82, Ser-84–Gly-105, Asn-108–Leu-129, Ser-131–Glu-153, Asn-154–Leu-175, Lys-177–Lys-199, and Lys-200–Lys-222.

Belongs to the LRRC69 family.

The polypeptide is Leucine-rich repeat-containing protein 69 (LRRC69) (Homo sapiens (Human)).